The primary structure comprises 263 residues: Regulatory protein RecX (263 aa).

This sequence belongs to the RecX family.

The protein localises to the cytoplasm. Functionally, modulates RecA activity. This chain is Regulatory protein RecX, found in Bacillus licheniformis (strain ATCC 14580 / DSM 13 / JCM 2505 / CCUG 7422 / NBRC 12200 / NCIMB 9375 / NCTC 10341 / NRRL NRS-1264 / Gibson 46).